Consider the following 865-residue polypeptide: MVANKERAIKRKASEGGAKPEPITSKQEPLDESNDEDNSNESDYESDKENLLGSIENEGEDSSDSDGEYATDDDEDDVLSFESLNSDGEEEDEEEDAGTTLEEVEREAEEDDDEEDGEDDEEADSADDVNSDSSPEEDEGDLEDSSDEELEEEEEEEEAKENGKEKPAKAKAERKQREEQFESDDEPLPDDLKLGRIEDVLGTGEKKTRGLGVFPPVPKRKGKAAQDEYAAGDTSDEEDIRNTVGNIPMHWYDEYKHVGYDWDAKKIIKAKKGDAIDDFLQRMEDPNFWRTVTDPQTGQKVVLSDEDIGLIKRIMSGRNPDAEYDDYEPFIEWFTSEVEKMPIRNIPESKRSFLPSKAEKHKIGRYVHALKMGWMKTMAEKRRLEAIRRQPKFYMLWTTDHGKEEMRRIHDHVAAPKRMLPGHAESYNPPPEYLFDEKELEEWNKLANQPWKRKRAYVPQKYNSLREVPGYTRYVKERFLRCLDLYLAPRMRRSRVAVGAEYLIPKLPSPRDLQPFPTLQNLIYTGHTSLIRCISVEPKGEYIVTGSDDMTVKIWEISTARCIRTIPTGDIVRSVAWCPNSKISLVAAASGKRVLLINPKVGDYMLVKKTDDLLTEAPRSDTVDSERIRSAVQWGEVTEEEKKLGVRIVITHFREVRQVTWHGRGDYFATVMPDGAYRSVMIHQLSKRRSQVPFSKSKGLIQCVLFHPIKPCLFVATQRHIRVYDLVKQLMMKKLYPGCKWISSMAIHPKGDNLLIGTYEKRLMWFDLDLSTKPYQQLRIHNAAIRSVAFHPRYPLFASAGDDRSVIVSHGMVYNDLLQNPLIVPLRRLKNHAVVNDFSVFDVVFHPTQPWVFSSGADNTVRLYT.

2 disordered regions span residues 1–195 (MVAN…LKLG) and 207–240 (KTRG…EEDI). Composition is skewed to acidic residues over residues 30 to 44 (LDES…ESDY), 57 to 79 (NEGE…DDVL), and 87 to 159 (DGEE…EEEA). A compositionally biased stretch (basic and acidic residues) spans 160-180 (KENGKEKPAKAKAERKQREEQ). WD repeat units lie at residues 526–565 (GHTS…CIRT), 567–607 (PTGD…YMLV), 651–693 (THFR…SQVP), 696–734 (KSKG…MMKK), 737–776 (PGCK…KPYQ), 780–819 (IHNA…DLLQ), and 835–865 (VNDF…RLYT).

It belongs to the WD repeat BOP1/ERB1 family.

Its subcellular location is the nucleus. It is found in the nucleolus. The protein resides in the nucleoplasm. Required for maturation of ribosomal RNAs and formation of the large ribosomal subunit. This Anopheles gambiae (African malaria mosquito) protein is Ribosome biogenesis protein BOP1 homolog.